The following is a 424-amino-acid chain: Protein TUNICAMYCIN INDUCED 1 (424 aa).

An N-terminal signal peptide occupies residues Met1–Ala25. Residues Asn197, Asn296, and Asn406 are each glycosylated (N-linked (GlcNAc...) asparagine).

In terms of tissue distribution, restricted to pollen grains at high levels.

The protein localises to the endoplasmic reticulum. Involved in the regulation of pollen surface morphology, probably by modulating the secretion of proteins and/or lipids during pollen development. This is Protein TUNICAMYCIN INDUCED 1 from Arabidopsis thaliana (Mouse-ear cress).